We begin with the raw amino-acid sequence, 1382 residues long: Ninein-like protein (1382 aa).

EF-hand domains are found at residues 7–42 (HYVS…LHLE) and 41–76 (LEQQ…VLSS). The disordered stretch occupies residues 144 to 164 (ASLESVESPKSDEEAESTKEA). Ser148 carries the post-translational modification Phosphoserine. Residues 150 to 164 (ESPKSDEEAESTKEA) are compositionally biased toward basic and acidic residues. 2 EF-hand domains span residues 196-231 (TPES…VGLQ) and 233-268 (LEKE…HEPA). Ca(2+)-binding residues include Asp246, Asp248, Asp250, Lys252, and Glu257. 3 coiled-coil regions span residues 384-424 (QELS…MDDC), 484-579 (AGLR…WARL), and 616-699 (IETE…QLQD). Residues 495 to 497 (KEN) carry the KEN box motif. Residues 633–641 (RTQLETKVN) carry the D-box motif. 2 disordered regions span residues 857–969 (PLAW…ASCR) and 982–1006 (RARS…GALE). Residues 991-1004 (QEQASEQQARAEGA) are compositionally biased toward low complexity. The stretch at 1046 to 1375 (ETKIALEREK…RALNKLVSRI (330 aa)) forms a coiled coil.

As to quaternary structure, interacts with gamma-tubulin and TUBGCP4. Interacts with anaphase promoting complex/cyclosome (APC/C). Interacts with CDC20 and FZR1. Isoform 2 interacts with LCA5 and USH2A. Isoform 2 interacts with DZANK1. Phosphorylated by PLK1 which disrupts its centrosome association and interaction with gamma-tubulin. Post-translationally, ubiquitinated by the APC/C complex leading to its degradation. In terms of tissue distribution, expressed in KYSE-150 esophageal carcinoma, HeLa cervical carcinoma and U2OS osteosarcoma cells. Expression is regulated in a cell cycle-dependent manner and peaks during G2/M phase (at protein level). Expressed in fetal heart, skeletal muscle, liver, lung and cochlea, and in adult brain, testis, kidney and retina.

The protein resides in the cytoplasm. It localises to the cytoskeleton. It is found in the microtubule organizing center. The protein localises to the centrosome. Functionally, involved in the microtubule organization in interphase cells. Overexpression induces the fragmentation of the Golgi, and causes lysosomes to disperse toward the cell periphery; it also interferes with mitotic spindle assembly. Involved in vesicle transport in photoreceptor cells. May play a role in ovarian carcinogenesis. In Homo sapiens (Human), this protein is Ninein-like protein (NINL).